The chain runs to 364 residues: Dual-specificity RNA methyltransferase RlmN (364 aa).

Glutamate 91 acts as the Proton acceptor in catalysis. The Radical SAM core domain occupies 102-337; it reads GTLRITQCLS…AIIRKSKGQD (236 aa). Cysteine 109 and cysteine 342 are disulfide-bonded. Residues cysteine 116, cysteine 120, and cysteine 123 each contribute to the [4Fe-4S] cluster site. S-adenosyl-L-methionine contacts are provided by residues 169 to 170, serine 201, 223 to 225, and asparagine 299; these read GE and SLH. The active-site S-methylcysteine intermediate is the cysteine 342.

Belongs to the radical SAM superfamily. RlmN family. The cofactor is [4Fe-4S] cluster.

It localises to the cytoplasm. It catalyses the reaction adenosine(2503) in 23S rRNA + 2 reduced [2Fe-2S]-[ferredoxin] + 2 S-adenosyl-L-methionine = 2-methyladenosine(2503) in 23S rRNA + 5'-deoxyadenosine + L-methionine + 2 oxidized [2Fe-2S]-[ferredoxin] + S-adenosyl-L-homocysteine. The catalysed reaction is adenosine(37) in tRNA + 2 reduced [2Fe-2S]-[ferredoxin] + 2 S-adenosyl-L-methionine = 2-methyladenosine(37) in tRNA + 5'-deoxyadenosine + L-methionine + 2 oxidized [2Fe-2S]-[ferredoxin] + S-adenosyl-L-homocysteine. Functionally, specifically methylates position 2 of adenine 2503 in 23S rRNA and position 2 of adenine 37 in tRNAs. m2A2503 modification seems to play a crucial role in the proofreading step occurring at the peptidyl transferase center and thus would serve to optimize ribosomal fidelity. The protein is Dual-specificity RNA methyltransferase RlmN of Nitratidesulfovibrio vulgaris (strain ATCC 29579 / DSM 644 / CCUG 34227 / NCIMB 8303 / VKM B-1760 / Hildenborough) (Desulfovibrio vulgaris).